Consider the following 160-residue polypeptide: Cytochrome b6-f complex subunit 4 (160 aa).

The next 3 helical transmembrane spans lie at 36-56 (LLYI…GLAV), 95-115 (LLGV…PFIE), and 131-151 (AVFL…TFPI).

The protein belongs to the cytochrome b family. PetD subfamily. The 4 large subunits of the cytochrome b6-f complex are cytochrome b6, subunit IV (17 kDa polypeptide, petD), cytochrome f and the Rieske protein, while the 4 small subunits are petG, petL, petM and petN. The complex functions as a dimer.

Its subcellular location is the plastid. The protein localises to the cyanelle thylakoid membrane. Functionally, component of the cytochrome b6-f complex, which mediates electron transfer between photosystem II (PSII) and photosystem I (PSI), cyclic electron flow around PSI, and state transitions. The protein is Cytochrome b6-f complex subunit 4 of Cyanophora paradoxa.